A 142-amino-acid polypeptide reads, in one-letter code: Hemoglobin subunit alpha-1 (142 aa).

Serine 1 is subject to N-acetylserine. The region spanning 1–142 is the Globin domain; sequence SLSDKDKAAV…VALALAERYR (142 aa). An O2-binding site is contributed by histidine 59. Histidine 88 is a heme b binding site.

It belongs to the globin family. In terms of assembly, hb1 is a heterotetramer of two alpha-2 chains and two beta chains, while Hb2 is a heterotetramer of two alpha-2 chains and two beta chains. In terms of tissue distribution, red blood cells.

Functionally, involved in oxygen transport from gills to the various peripheral tissues. This Notothenia angustata (Rockcod) protein is Hemoglobin subunit alpha-1 (hba1).